Reading from the N-terminus, the 1019-residue chain is Insulin-degrading enzyme (1019 aa).

His-108 is a binding site for Zn(2+). Glu-111 serves as the catalytic Proton acceptor. Zn(2+) contacts are provided by His-112 and Glu-189. The residue at position 192 (Lys-192) is an N6-succinyllysine. Substrate-binding positions include 336-342 (HLIGHEG) and 359-363 (LVGGQ). Arg-429 lines the ATP pocket. An N6-succinyllysine modification is found at Lys-697. The SlyX motif motif lies at 853–858 (EKPPHY). ATP is bound at residue 895–901 (DKPKKLS).

The protein belongs to the peptidase M16 family. As to quaternary structure, homodimer. Can also form homotetramers. (Microbial infection) Interacts (via N-terminus) with varicella-zoster virus (VZV) envelope glycoprotein E (via N-terminus); the membrane-associated isoform may function as an entry receptor for this virus. Requires Zn(2+) as cofactor. The N-terminus is blocked. Detected in brain and in cerebrospinal fluid (at protein level).

Its subcellular location is the cytoplasm. It is found in the cytosol. The protein resides in the cell membrane. It localises to the secreted. It catalyses the reaction Degradation of insulin, glucagon and other polypeptides. No action on proteins.. Activated by small peptides. Activated by ATP and GTP, and to a lesser extent by CTP, TTP and PPPi. Inhibited by bacitracin. In vitro modification of Cys residues impairs enzyme activity. Functionally, plays a role in the cellular breakdown of insulin, APP peptides, IAPP peptides, natriuretic peptides, glucagon, bradykinin, kallidin, and other peptides, and thereby plays a role in intercellular peptide signaling. Substrate binding induces important conformation changes, making it possible to bind and degrade larger substrates, such as insulin. Contributes to the regulation of peptide hormone signaling cascades and regulation of blood glucose homeostasis via its role in the degradation of insulin, glucagon and IAPP. Plays a role in the degradation and clearance of APP-derived amyloidogenic peptides that are secreted by neurons and microglia. Degrades the natriuretic peptides ANP, BNP and CNP, inactivating their ability to raise intracellular cGMP. Also degrades an aberrant frameshifted 40-residue form of NPPA (fsNPPA) which is associated with familial atrial fibrillation in heterozygous patients. Involved in antigen processing. Produces both the N terminus and the C terminus of MAGEA3-derived antigenic peptide (EVDPIGHLY) that is presented to cytotoxic T lymphocytes by MHC class I. Its function is as follows. (Microbial infection) The membrane-associated isoform acts as an entry receptor for varicella-zoster virus (VZV). In Homo sapiens (Human), this protein is Insulin-degrading enzyme.